A 1291-amino-acid chain; its full sequence is Capping protein-inhibiting regulator of actin dynamics (1291 aa).

Ser7 and Ser28 each carry phosphoserine. Disordered regions lie at residues Lys48 to Glu71, Gln84 to Ile137, His159 to Lys221, Lys234 to Arg253, Gln267 to Ala663, and Leu701 to Thr1238. Position 132 is a phosphoserine (Ser132). The segment covering His159–Trp176 has biased composition (basic residues). Residues Glu184–Gln199 show a composition bias toward polar residues. A compositionally biased stretch (basic and acidic residues) spans Gly201 to Lys221. Residues Leu270–Glu291 show a composition bias toward acidic residues. Composition is skewed to basic and acidic residues over residues Pro302 to Glu318, Asp326 to Lys461, and Glu470 to Pro483. Residues Ala324–Asp560 are required for interaction with actin-capping proteins. Position 482 is a phosphothreonine (Thr482). 2 positions are modified to phosphoserine: Ser493 and Ser510. Basic and acidic residues-rich tracts occupy residues Ala506–Leu527 and Glu534–Gly543. Positions Glu580 to Ala593 are enriched in low complexity. Over residues Asp594 to Thr612 the composition is skewed to basic and acidic residues. Ser636 is subject to Phosphoserine. Thr639 bears the Phosphothreonine mark. Residues Lys749–Gly778 are compositionally biased toward basic and acidic residues. Ser867 is subject to Phosphoserine. Over residues Thr875 to Asp888 the composition is skewed to low complexity. A compositionally biased stretch (basic and acidic residues) spans Gln969–Glu983. Thr1033 carries the phosphothreonine modification. Ser1037 bears the Phosphoserine mark. The span at Gly1056–Ser1070 shows a compositional bias: basic and acidic residues. Ser1076 carries the phosphoserine modification. Composition is skewed to basic and acidic residues over residues Glu1081–Pro1098, Thr1117–Glu1141, and Gly1157–Lys1182. Composition is skewed to polar residues over residues Glu1183–Ser1197 and Lys1229–Thr1238.

In terms of assembly, directly interacts with actin-capping proteins CAPZA1, CAPZA2 and CAPZB; this interaction decreases the binding of capping proteins to actin. In terms of tissue distribution, expressed in the small intestine (at protein level).

The protein localises to the cytoplasm. It is found in the cytosol. Functionally, involved in epithelial cell integrity by acting on the dynamics of the actin cytoskeleton. Positively regulates the actin polymerization, by inhibiting the interaction of actin-capping proteins with actin. The sequence is that of Capping protein-inhibiting regulator of actin dynamics from Mus musculus (Mouse).